A 616-amino-acid polypeptide reads, in one-letter code: MAU2 chromatid cohesion factor homolog (616 aa).

3 TPR repeats span residues Phe-90 to Asn-123, Gly-445 to Glu-478, and Ser-485 to Ile-518.

It belongs to the SCC4/mau-2 family. Component of the cohesin loading complex.

The protein resides in the nucleus. The protein localises to the nucleoplasm. Its function is as follows. Required for association of the cohesin complex with chromatin during interphase. Plays a role in sister chromatid cohesion and normal progression through prometaphase. The protein is MAU2 chromatid cohesion factor homolog of Culex quinquefasciatus (Southern house mosquito).